The following is a 340-amino-acid chain: Delta-aminolevulinic acid dehydratase (340 aa).

Zn(2+)-binding residues include C133, C135, and C143. Catalysis depends on K210, which acts as the Schiff-base intermediate with substrate. Residues R220 and R232 each contribute to the 5-aminolevulinate site. The active-site Schiff-base intermediate with substrate is the K263. 5-aminolevulinate-binding residues include S290 and Y329.

The protein belongs to the ALAD family. As to quaternary structure, homooctamer. The cofactor is Zn(2+).

It catalyses the reaction 2 5-aminolevulinate = porphobilinogen + 2 H2O + H(+). It functions in the pathway porphyrin-containing compound metabolism; protoporphyrin-IX biosynthesis; coproporphyrinogen-III from 5-aminolevulinate: step 1/4. Functionally, catalyzes an early step in the biosynthesis of tetrapyrroles. Binds two molecules of 5-aminolevulinate per subunit, each at a distinct site, and catalyzes their condensation to form porphobilinogen. This is Delta-aminolevulinic acid dehydratase (HEM2) from Candida glabrata (strain ATCC 2001 / BCRC 20586 / JCM 3761 / NBRC 0622 / NRRL Y-65 / CBS 138) (Yeast).